We begin with the raw amino-acid sequence, 100 residues long: Small ribosomal subunit protein uS14c (100 aa).

This sequence belongs to the universal ribosomal protein uS14 family. Part of the 30S ribosomal subunit.

The protein localises to the plastid. Its subcellular location is the chloroplast. Its function is as follows. Binds 16S rRNA, required for the assembly of 30S particles. This Cucumis sativus (Cucumber) protein is Small ribosomal subunit protein uS14c.